Consider the following 314-residue polypeptide: 3'-5' exoribonuclease YhaM (314 aa).

The HD domain occupies 163–279; sequence HVVSMLDLAK…LHYIDNLDAK (117 aa).

It belongs to the YhaM family.

Its function is as follows. Shows a 3'-5' exoribonuclease activity. The polypeptide is 3'-5' exoribonuclease YhaM (Bacillus cereus (strain AH820)).